Consider the following 234-residue polypeptide: NAD-dependent protein deacylase (234 aa).

Residues methionine 1–leucine 234 enclose the Deacetylase sirtuin-type domain. Glycine 12 to tryptophan 31 contributes to the NAD(+) binding site. Substrate contacts are provided by tyrosine 56 and arginine 59. Glutamine 93–aspartate 96 contributes to the NAD(+) binding site. Histidine 111 functions as the Proton acceptor in the catalytic mechanism. Zn(2+)-binding residues include cysteine 119 and cysteine 138. Residues glycine 178–serine 180, asparagine 204–glutamate 206, and alanine 222 contribute to the NAD(+) site.

It belongs to the sirtuin family. Class III subfamily. Zn(2+) serves as cofactor.

It is found in the cytoplasm. It catalyses the reaction N(6)-acetyl-L-lysyl-[protein] + NAD(+) + H2O = 2''-O-acetyl-ADP-D-ribose + nicotinamide + L-lysyl-[protein]. It carries out the reaction N(6)-succinyl-L-lysyl-[protein] + NAD(+) + H2O = 2''-O-succinyl-ADP-D-ribose + nicotinamide + L-lysyl-[protein]. Its function is as follows. NAD-dependent lysine deacetylase and desuccinylase that specifically removes acetyl and succinyl groups on target proteins. Modulates the activities of several proteins which are inactive in their acylated form. In Pasteurella multocida (strain Pm70), this protein is NAD-dependent protein deacylase.